We begin with the raw amino-acid sequence, 112 residues long: Putative pterin-4-alpha-carbinolamine dehydratase (112 aa).

Belongs to the pterin-4-alpha-carbinolamine dehydratase family.

It carries out the reaction (4aS,6R)-4a-hydroxy-L-erythro-5,6,7,8-tetrahydrobiopterin = (6R)-L-erythro-6,7-dihydrobiopterin + H2O. In Syntrophotalea carbinolica (strain DSM 2380 / NBRC 103641 / GraBd1) (Pelobacter carbinolicus), this protein is Putative pterin-4-alpha-carbinolamine dehydratase.